The chain runs to 74 residues: ATP synthase subunit c (74 aa).

2 consecutive transmembrane segments (helical) span residues 9–29 and 54–74; these read IGAGIAVIALAGVGIGLGNIF and FALTEAVALYALLIAFLILFV.

Belongs to the ATPase C chain family. F-type ATPases have 2 components, F(1) - the catalytic core - and F(0) - the membrane proton channel. F(1) has five subunits: alpha(3), beta(3), gamma(1), delta(1), epsilon(1). F(0) has three main subunits: a(1), b(2) and c(10-14). The alpha and beta chains form an alternating ring which encloses part of the gamma chain. F(1) is attached to F(0) by a central stalk formed by the gamma and epsilon chains, while a peripheral stalk is formed by the delta and b chains.

The protein resides in the cell inner membrane. In terms of biological role, f(1)F(0) ATP synthase produces ATP from ADP in the presence of a proton or sodium gradient. F-type ATPases consist of two structural domains, F(1) containing the extramembraneous catalytic core and F(0) containing the membrane proton channel, linked together by a central stalk and a peripheral stalk. During catalysis, ATP synthesis in the catalytic domain of F(1) is coupled via a rotary mechanism of the central stalk subunits to proton translocation. Key component of the F(0) channel; it plays a direct role in translocation across the membrane. A homomeric c-ring of between 10-14 subunits forms the central stalk rotor element with the F(1) delta and epsilon subunits. The sequence is that of ATP synthase subunit c from Gluconacetobacter diazotrophicus (strain ATCC 49037 / DSM 5601 / CCUG 37298 / CIP 103539 / LMG 7603 / PAl5).